A 168-amino-acid polypeptide reads, in one-letter code: Probable acetolactate synthase small subunit (168 aa).

The ACT domain occupies 10-84 (IISALVEHKP…DVIKVRDLEP (75 aa)).

Belongs to the acetolactate synthase small subunit family. Dimer of large and small chains.

It catalyses the reaction 2 pyruvate + H(+) = (2S)-2-acetolactate + CO2. It participates in amino-acid biosynthesis; L-isoleucine biosynthesis; L-isoleucine from 2-oxobutanoate: step 1/4. It functions in the pathway amino-acid biosynthesis; L-valine biosynthesis; L-valine from pyruvate: step 1/4. This is Probable acetolactate synthase small subunit (ilvH) from Methanothermobacter thermautotrophicus (strain ATCC 29096 / DSM 1053 / JCM 10044 / NBRC 100330 / Delta H) (Methanobacterium thermoautotrophicum).